Consider the following 225-residue polypeptide: Holliday junction branch migration complex subunit RuvA (225 aa).

A domain I region spans residues 1–71 (MISWINGELV…EDSDLLFGFT (71 aa)). The segment at 72 to 150 (SKDQKFFFIE…SKIQIEEEKG (79 aa)) is domain II. The segment at 151-161 (QEEFEITNPEI) is flexible linker. Residues 161–225 (IYKLMEDLQL…LDQGNSNLAR (65 aa)) are domain III.

It belongs to the RuvA family. In terms of assembly, homotetramer. Forms an RuvA(8)-RuvB(12)-Holliday junction (HJ) complex. HJ DNA is sandwiched between 2 RuvA tetramers; dsDNA enters through RuvA and exits via RuvB. An RuvB hexamer assembles on each DNA strand where it exits the tetramer. Each RuvB hexamer is contacted by two RuvA subunits (via domain III) on 2 adjacent RuvB subunits; this complex drives branch migration. In the full resolvosome a probable DNA-RuvA(4)-RuvB(12)-RuvC(2) complex forms which resolves the HJ.

The protein localises to the cytoplasm. Its function is as follows. The RuvA-RuvB-RuvC complex processes Holliday junction (HJ) DNA during genetic recombination and DNA repair, while the RuvA-RuvB complex plays an important role in the rescue of blocked DNA replication forks via replication fork reversal (RFR). RuvA specifically binds to HJ cruciform DNA, conferring on it an open structure. The RuvB hexamer acts as an ATP-dependent pump, pulling dsDNA into and through the RuvAB complex. HJ branch migration allows RuvC to scan DNA until it finds its consensus sequence, where it cleaves and resolves the cruciform DNA. The chain is Holliday junction branch migration complex subunit RuvA from Prochlorococcus marinus (strain MIT 9215).